We begin with the raw amino-acid sequence, 291 residues long: 4-hydroxy-tetrahydrodipicolinate synthase (291 aa).

Pyruvate is bound at residue threonine 45. Tyrosine 133 serves as the catalytic Proton donor/acceptor. The active-site Schiff-base intermediate with substrate is the lysine 161. Pyruvate is bound at residue isoleucine 203.

The protein belongs to the DapA family. In terms of assembly, homotetramer.

The protein localises to the cytoplasm. It catalyses the reaction L-aspartate 4-semialdehyde + pyruvate = (2S,4S)-4-hydroxy-2,3,4,5-tetrahydrodipicolinate + H2O + H(+). It functions in the pathway amino-acid biosynthesis; L-lysine biosynthesis via DAP pathway; (S)-tetrahydrodipicolinate from L-aspartate: step 3/4. Is allosterically feedback inhibited by lysine; the N.meningitidis enzyme is significantly more sensitive to lysine than the E.coli enzyme. Shows substrate inhibition by (S)-ASA, with a Ki of 1.7 mM. Its function is as follows. Catalyzes the condensation of (S)-aspartate-beta-semialdehyde [(S)-ASA] and pyruvate to 4-hydroxy-tetrahydrodipicolinate (HTPA). This chain is 4-hydroxy-tetrahydrodipicolinate synthase, found in Neisseria meningitidis serogroup B (strain ATCC BAA-335 / MC58).